Consider the following 52-residue polypeptide: MRQENKPCQQFYFVLDEKALQSPLRENPSKNVRTIPDAGDENSSFGHARVIA.

Residues 24-52 (LRENPSKNVRTIPDAGDENSSFGHARVIA) are disordered.

This is an uncharacterized protein from Treponema pallidum (strain Nichols).